A 189-amino-acid polypeptide reads, in one-letter code: Phosphomevalonate kinase (189 aa).

ATP is bound by residues 10-16 (KRKCGKD) and arginine 138. Substrate is bound at residue asparagine 168.

It is found in the cytoplasm. Its subcellular location is the cytosol. It catalyses the reaction (R)-5-phosphomevalonate + ATP = (R)-5-diphosphomevalonate + ADP. It functions in the pathway isoprenoid biosynthesis; isopentenyl diphosphate biosynthesis via mevalonate pathway; isopentenyl diphosphate from (R)-mevalonate: step 2/3. The polypeptide is Phosphomevalonate kinase (Drosophila melanogaster (Fruit fly)).